A 486-amino-acid polypeptide reads, in one-letter code: Patatin-like phospholipase domain-containing protein 2 (486 aa).

At 1 to 8 (MFPKETTW) the chain is on the cytoplasmic side. A helical membrane pass occupies residues 9–29 (NISFAGCGFLGVYHIGVASCL). Residues 10-179 (ISFAGCGFLG…SDNLPLYELK (170 aa)) form the PNPLA domain. A GXGXXG motif is present at residues 14–19 (GCGFLG). Over 30 to 42 (REHAPFLVANATH) the chain is Extracellular. N-linked (GlcNAc...) asparagine glycosylation occurs at asparagine 39. Residues 43 to 63 (IYGASAGALTATALVTGACLG) form a helical membrane-spanning segment. Residues 45–49 (GASAG) carry the GXSXG motif. Residue serine 47 is the Nucleophile of the active site. The Cytoplasmic segment spans residues 64-137 (EAGANIIEVS…IITHFNSKEE (74 aa)). Lysine 92 is covalently cross-linked (Glycyl lysine isopeptide (Lys-Gly) (interchain with G-Cter in ubiquitin)). A helical membrane pass occupies residues 138–158 (LIQANVCSTFIPVYCGLIPPS). Topologically, residues 159–334 (LQGVRYVDGG…TTLSNMLPVR (176 aa)) are extracellular. The Proton acceptor role is filled by aspartate 166. Residues 166–168 (DGG) carry the DGA/G motif. The chain crosses the membrane as a helical span at residues 335–355 (LAMAMMVPYTLPLESAVSFTI). Topologically, residues 356 to 486 (RLLEWLPDVP…PQHPPSSPPC (131 aa)) are cytoplasmic. Serine 377 carries the post-translational modification Phosphoserine; in vitro. Phosphoserine; by PKA is present on residues serine 399 and serine 409. Phosphoserine; in vitro is present on serine 433.

Interacts with ABHD5; this association stimulates PNPLA2 triglyceride hydrolase activity. Interacts with SERPINF1; this interaction stimulates the phospholipase A2 activity of PNPLA2. Despite a colocalization in lipid droplets, it probably does not interact with PLIN. Interacts with PLIN5; prevents interaction with ABHD5. Interacts with FAF2. Post-translationally, phosphorylation at Ser-409 by PKA is increased during fasting and moderate intensity exercise, and moderately increases lipolytic activity. In terms of processing, ubiquitinated by PEX2 in response to reactive oxygen species (ROS), leading to its degradation. Ubiquitination is stimulated by LDAH.

Its subcellular location is the lipid droplet. It localises to the cell membrane. The protein localises to the cytoplasm. The catalysed reaction is a triacylglycerol + H2O = a diacylglycerol + a fatty acid + H(+). The enzyme catalyses a triacylglycerol + H2O = a 1,2-diacylglycerol + a fatty acid + H(+). It catalyses the reaction a triacylglycerol + H2O = a 1,3-diacylglycerol + a fatty acid + H(+). It carries out the reaction a triacyl-sn-glycerol + H2O = a 1,3-diacyl-sn-glycerol + a fatty acid + H(+). The catalysed reaction is a triacyl-sn-glycerol + H2O = a 2,3-diacyl-sn-glycerol + a fatty acid + H(+). The enzyme catalyses a 1-acylglycerol + a 1,3-diacylglycerol = a triacylglycerol + glycerol. It catalyses the reaction a 1-acylglycerol + a 1,2-diacylglycerol = a triacylglycerol + glycerol. It carries out the reaction 2 a 1-acylglycerol = a 1,2-diacylglycerol + glycerol. The catalysed reaction is a triacylglycerol + all-trans-retinol = an all-trans-retinyl ester + a diacylglycerol. The enzyme catalyses 1,2-di-(9Z-octadecenoyl)-glycerol + (9Z)-octadecenoate + H(+) = 1,2,3-tri-(9Z-octadecenoyl)-glycerol + H2O. It catalyses the reaction 1,2,3-tri-(9Z-octadecenoyl)-glycerol + H2O = 1,3-di-(9Z-octadecenoyl)-glycerol + (9Z)-octadecenoate + H(+). It carries out the reaction 1-(9Z-octadecenoyl)-glycerol + 1,3-di-(9Z-octadecenoyl)-glycerol = 1,2,3-tri-(9Z-octadecenoyl)-glycerol + glycerol. The catalysed reaction is 1-(9Z-octadecenoyl)-glycerol + 1,2-di-(9Z-octadecenoyl)-glycerol = 1,2,3-tri-(9Z-octadecenoyl)-glycerol + glycerol. The enzyme catalyses 2 1-(9Z-octadecenoyl)-glycerol = 1,2-di-(9Z-octadecenoyl)-glycerol + glycerol. It catalyses the reaction 1,2,3-tri-(9Z-octadecenoyl)-glycerol + all-trans-retinol = all-trans-retinyl 9Z-octadecenoate + di-(9Z)-octadecenoylglycerol. It carries out the reaction 1,2,3-tri-(9Z)-hexadecenoylglycerol + H2O = 1,3-di-(9Z)-hexadecenoylglycerol + (9Z)-hexadecenoate + H(+). The catalysed reaction is 1,2,3-tri-(9Z,12Z)-octadecadienoylglycerol + H2O = 1,3-di-(9Z,12Z)-octadecadienoylglycerol + (9Z,12Z)-octadecadienoate + H(+). The enzyme catalyses 1,2,3-tri-(9Z,12Z,15Z)-octadecatrienoylglycerol + H2O = 1,3-di-(9Z,12Z,15Z)-octadecatrienoylglycerol + (9Z,12Z,15Z)-octadecatrienoate + H(+). It catalyses the reaction 1,3-di-(9Z)-octadecenoyl-2-hexadecanoylglycerol + H2O = 1,3-di-(9Z-octadecenoyl)-glycerol + hexadecanoate + H(+). It carries out the reaction 1,2-di-(9Z)-octadecenoyl-3-hexadecanoyl-sn-glycerol + H2O = 1-(9Z)-octadecenoyl-3-hexadecanoyl-sn-glycerol + (9Z)-octadecenoate + H(+). The catalysed reaction is 1-hexadecanoyl-2,3-di-(9Z)-octadecenoyl-sn-glycerol + H2O = 1-hexadecanoyl-3-(9Z)-octadecenoyl-sn-glycerol + (9Z)-octadecenoate + H(+). The enzyme catalyses 1,2,3-tri-(9Z-octadecenoyl)-glycerol + H2O = 2,3-di-(9Z)-octadecenoyl-sn-glycerol + (9Z)-octadecenoate + H(+). It catalyses the reaction 1,2,3-tri-(9Z)-hexadecenoylglycerol + H2O = 2,3-di-(9Z)-hexadecenoyl-sn-glycerol + (9Z)-hexadecenoate + H(+). It carries out the reaction 1,2,3-tri-(9Z,12Z)-octadecadienoylglycerol + H2O = 2,3-di-(9Z,12Z)-octadecadienoyl-sn-glycerol + (9Z,12Z)-octadecadienoate + H(+). The catalysed reaction is 1,2,3-tri-(9Z,12Z,15Z)-octadecatrienoylglycerol + H2O = 2,3-di-(9Z,12Z,15Z)-octadecatrienoyl-sn-glycerol + (9Z,12Z,15Z)-octadecatrienoate + H(+). The enzyme catalyses 1,3-di-(9Z)-octadecenoyl-2-hexadecanoylglycerol + H2O = 2-hexadecanoyl-3-(9Z)-octadecenoyl-sn-glycerol + (9Z)-octadecenoate + H(+). It catalyses the reaction 1-hexadecanoyl-2,3-di-(9Z)-octadecenoyl-sn-glycerol + H2O = 2,3-di-(9Z)-octadecenoyl-sn-glycerol + hexadecanoate + H(+). It carries out the reaction 1,2-di-(9Z)-octadecenoyl-3-hexadecanoyl-sn-glycerol + H2O = 2-(9Z-octadecenoyl)-3-hexadecanoyl-sn-glycerol + (9Z)-octadecenoate + H(+). The catalysed reaction is a 1,2-diacyl-sn-glycero-3-phosphocholine + H2O = a 1-acyl-sn-glycero-3-phosphocholine + a fatty acid + H(+). The enzyme catalyses 1,2,3-tri-(9Z-octadecenoyl)-glycerol + 9-hydroxy-octadecanoate = 9-(9Z-octadecenoyloxy)-octadecanoate + 2,3-di-(9Z)-octadecenoyl-sn-glycerol. It catalyses the reaction 1-hexadecanoyl-2,3-di-(9Z)-octadecenoyl-sn-glycerol + 9-hydroxy-octadecanoate = 9-hexadecanoyloxy-octadecanoate + 2,3-di-(9Z)-octadecenoyl-sn-glycerol. It carries out the reaction 1,2,3-tri-(10Z)-heptadecenoylglycerol + 9-hydroxy-octadecanoate = 2,3-di-(10Z-heptadecenoyl)-sn-glycerol + 9-(10Z-heptadecenoyloxy)-octadecanoate. The catalysed reaction is 1,2,3-tri-(9Z,12Z)-octadecadienoylglycerol + 9-hydroxy-octadecanoate = 2,3-di-(9Z,12Z)-octadecadienoyl-sn-glycerol + 9-(9Z,12Z-octadecadienoyloxy)-octadecanoate. The enzyme catalyses 1,2,3-tri-(9Z)-hexadecenoylglycerol + 9-hydroxy-octadecanoate = 2,3-di-(9Z)-hexadecenoyl-sn-glycerol + 9-(9Z-hexadecenoyloxy)-octadecanoate. It catalyses the reaction 9-hydroxy-octadecanoate + 1,2-di-(9Z-octadecenoyl)-sn-glycerol = 9-(9Z-octadecenoyloxy)-octadecanoate + 2-(9Z-octadecenoyl)-glycerol. It carries out the reaction 1-hexadecanoyl-2,3-di-(9Z)-octadecenoyl-sn-glycerol + 9-hydroxy-octadecanoate = 1-hexadecanoyl-3-(9Z)-octadecenoyl-sn-glycerol + 9-(9Z-octadecenoyloxy)-octadecanoate. Its pathway is glycerolipid metabolism; triacylglycerol degradation. Functionally, catalyzes the initial step in triglyceride hydrolysis in adipocyte and non-adipocyte lipid droplets. Exhibits a strong preference for the hydrolysis of long-chain fatty acid esters at the sn-2 position of the glycerol backbone and acts coordinately with LIPE/HLS and DGAT2 within the lipolytic cascade. Also possesses acylglycerol transacylase and phospholipase A2 activities. Transfers fatty acid from triglyceride to retinol, hydrolyzes retinylesters, and generates 1,3-diacylglycerol from triglycerides. Regulates adiposome size and may be involved in the degradation of adiposomes. Catalyzes the formation of an ester bond between hydroxy fatty acids and fatty acids derived from triglycerides or diglycerides to generate fatty acid esters of hydroxy fatty acids (FAHFAs) in adipocytes. Acts antagonistically with LDAH in regulation of cellular lipid stores. Inhibits LDAH-stimulated lipid droplet fusion. May play an important role in energy homeostasis. May play a role in the response of the organism to starvation, enhancing hydrolysis of triglycerides and providing free fatty acids to other tissues to be oxidized in situations of energy depletion. The protein is Patatin-like phospholipase domain-containing protein 2 (PNPLA2) of Bos taurus (Bovine).